The sequence spans 327 residues: tRNA-modifying protein YgfZ (327 aa).

2 residues coordinate folate: Trp-27 and Trp-189.

This sequence belongs to the tRNA-modifying YgfZ family.

The protein localises to the cytoplasm. In terms of biological role, folate-binding protein involved in regulating the level of ATP-DnaA and in the modification of some tRNAs. It is probably a key factor in regulatory networks that act via tRNA modification, such as initiation of chromosomal replication. The protein is tRNA-modifying protein YgfZ of Klebsiella pneumoniae (strain 342).